The sequence spans 247 residues: Coproheme decarboxylase (247 aa).

Residues arginine 129, 143–147 (YPMDK), histidine 170, glutamine 183, and serine 221 contribute to the Fe-coproporphyrin III site. Residue tyrosine 143 is part of the active site.

This sequence belongs to the ChdC family. Type 1 subfamily. The cofactor is Fe-coproporphyrin III.

The catalysed reaction is Fe-coproporphyrin III + 2 H2O2 + 2 H(+) = heme b + 2 CO2 + 4 H2O. It carries out the reaction Fe-coproporphyrin III + H2O2 + H(+) = harderoheme III + CO2 + 2 H2O. The enzyme catalyses harderoheme III + H2O2 + H(+) = heme b + CO2 + 2 H2O. Its pathway is porphyrin-containing compound metabolism; protoheme biosynthesis. Involved in coproporphyrin-dependent heme b biosynthesis. Catalyzes the decarboxylation of Fe-coproporphyrin III (coproheme) to heme b (protoheme IX), the last step of the pathway. The reaction occurs in a stepwise manner with a three-propionate intermediate. This is Coproheme decarboxylase from Bacillus cereus (strain ATCC 10987 / NRS 248).